The following is a 278-amino-acid chain: Small ribosomal subunit protein uS3 (278 aa).

Positions 38 to 106 constitute a KH type-2 domain; the sequence is IRKLLSKGME…QVQLNILEVK (69 aa). A disordered region spans residues 213–278; it reads RQAQAAARAG…APAPAENQEG (66 aa). Residues 214–223 show a composition bias toward low complexity; the sequence is QAQAAARAGV. Over residues 232 to 253 the composition is skewed to basic and acidic residues; the sequence is RGGERPSRGSRGDRPTRADRGG. Low complexity predominate over residues 259 to 278; the sequence is EATGAATEQAAPAPAENQEG.

It belongs to the universal ribosomal protein uS3 family. As to quaternary structure, part of the 30S ribosomal subunit. Forms a tight complex with proteins S10 and S14.

Its function is as follows. Binds the lower part of the 30S subunit head. Binds mRNA in the 70S ribosome, positioning it for translation. The sequence is that of Small ribosomal subunit protein uS3 from Nocardioides sp. (strain ATCC BAA-499 / JS614).